A 504-amino-acid chain; its full sequence is ATP synthase subunit alpha (504 aa).

Residue 169-176 (GDRQTGKT) coordinates ATP.

Belongs to the ATPase alpha/beta chains family. As to quaternary structure, F-type ATPases have 2 components, CF(1) - the catalytic core - and CF(0) - the membrane proton channel. CF(1) has five subunits: alpha(3), beta(3), gamma(1), delta(1), epsilon(1). CF(0) has three main subunits: a(1), b(2) and c(9-12). The alpha and beta chains form an alternating ring which encloses part of the gamma chain. CF(1) is attached to CF(0) by a central stalk formed by the gamma and epsilon chains, while a peripheral stalk is formed by the delta and b chains.

Its subcellular location is the cell membrane. It catalyses the reaction ATP + H2O + 4 H(+)(in) = ADP + phosphate + 5 H(+)(out). Its function is as follows. Produces ATP from ADP in the presence of a proton gradient across the membrane. The alpha chain is a regulatory subunit. This Clostridium kluyveri (strain NBRC 12016) protein is ATP synthase subunit alpha.